The primary structure comprises 161 residues: Zinc metalloproteinase/disintegrin (161 aa).

The Peptidase M12B domain maps to 1–72 (ERDLLVAVTM…ENPQCILNKH (72 aa)). His-12 lines the Zn(2+) pocket. Glu-13 is a catalytic residue. Zn(2+)-binding residues include His-16 and His-22. 2 cysteine pairs are disulfide-bonded: Cys-27–Cys-51 and Cys-29–Cys-34. Positions 73–88 (LRTDTVSTPVSGNELL) are excised as a propeptide. The 73-residue stretch at 89-161 (EAGEECDCGT…ADCPRNRFHA (73 aa)) folds into the Disintegrin domain. Intrachain disulfides connect Cys-94–Cys-109, Cys-96–Cys-104, Cys-103–Cys-126, Cys-117–Cys-123, Cys-122–Cys-147, and Cys-135–Cys-154. The short motif at 139 to 141 (RGD) is the Cell attachment site element.

The protein belongs to the venom metalloproteinase (M12B) family. P-II subfamily. P-IIa sub-subfamily. As to quaternary structure, monomer. Expressed by the venom gland.

It is found in the secreted. Its function is as follows. Impairs hemostasis in the envenomed animal. In terms of biological role, disintegrin: inhibit platelet aggregation induced by ADP, thrombin, platelet-activating factor and collagen. Acts by inhibiting fibrinogen interaction with platelet receptors GPIIb/GPIIIa (ITGA2B/ITGB3). The protein is Zinc metalloproteinase/disintegrin of Bothrops jararaca (Jararaca).